The following is a 200-amino-acid chain: Snake venom metalloproteinase rhomb-I (200 aa).

The region spanning 4-200 (KYIELVVVAD…RKPQCILNKP (197 aa)) is the Peptidase M12B domain. Residues Glu7 and Asp91 each contribute to the Ca(2+) site. Cystine bridges form between Cys115–Cys195, Cys155–Cys179, and Cys157–Cys162. His140 contacts Zn(2+). Glu141 is a catalytic residue. Zn(2+) contacts are provided by His144 and His150. Ca(2+) contacts are provided by Cys195 and Asn198.

As to quaternary structure, monomer. Zn(2+) serves as cofactor. Expressed by the venom gland.

The protein resides in the secreted. Functionally, snake venom zinc metalloproteinase that induces hemorrhage. The sequence is that of Snake venom metalloproteinase rhomb-I from Lachesis muta rhombeata (Bushmaster).